The following is a 687-amino-acid chain: Glycine--tRNA ligase beta subunit (687 aa).

Belongs to the class-II aminoacyl-tRNA synthetase family. Tetramer of two alpha and two beta subunits.

The protein resides in the cytoplasm. It catalyses the reaction tRNA(Gly) + glycine + ATP = glycyl-tRNA(Gly) + AMP + diphosphate. This is Glycine--tRNA ligase beta subunit from Geobacter sulfurreducens (strain ATCC 51573 / DSM 12127 / PCA).